Reading from the N-terminus, the 635-residue chain is Threonine--tRNA ligase (635 aa).

The 61-residue stretch at 1-61 folds into the TGS domain; sequence MVSIRLPDGS…DHDVALAIVT (61 aa). The tract at residues 242-533 is catalytic; sequence DHRKLGKQLD…LIEHHAGAMP (292 aa). Cys-333, His-384, and His-510 together coordinate Zn(2+).

Belongs to the class-II aminoacyl-tRNA synthetase family. Homodimer. Zn(2+) is required as a cofactor.

Its subcellular location is the cytoplasm. It catalyses the reaction tRNA(Thr) + L-threonine + ATP = L-threonyl-tRNA(Thr) + AMP + diphosphate + H(+). Functionally, catalyzes the attachment of threonine to tRNA(Thr) in a two-step reaction: L-threonine is first activated by ATP to form Thr-AMP and then transferred to the acceptor end of tRNA(Thr). Also edits incorrectly charged L-seryl-tRNA(Thr). The chain is Threonine--tRNA ligase from Paraburkholderia phytofirmans (strain DSM 17436 / LMG 22146 / PsJN) (Burkholderia phytofirmans).